Here is a 599-residue protein sequence, read N- to C-terminus: Sulfite reductase [NADPH] flavoprotein alpha-component (599 aa).

The Flavodoxin-like domain maps to 64–202 (ITLISASQTG…VAAQWRARIV (139 aa)). FMN is bound by residues 70–75 (SQTGNA), 117–120 (STQG), and 153–162 (LGDTSYEFFC). In terms of domain architecture, FAD-binding FR-type spans 234–448 (EAPLRASLSV…IEHNDNFRLP (215 aa)). FAD-binding positions include T322, A356, 386–389 (RLYS), 404–406 (TVG), Y410, and 419–422 (GGAS). Residues 519-520 (SR), 525-529 (KIYVQ), and D561 contribute to the NADP(+) site. FAD is bound at residue Y599.

This sequence belongs to the NADPH-dependent sulphite reductase flavoprotein subunit CysJ family. The protein in the N-terminal section; belongs to the flavodoxin family. It in the C-terminal section; belongs to the flavoprotein pyridine nucleotide cytochrome reductase family. Alpha(8)-beta(8). The alpha component is a flavoprotein, the beta component is a hemoprotein. It depends on FAD as a cofactor. FMN serves as cofactor.

It catalyses the reaction hydrogen sulfide + 3 NADP(+) + 3 H2O = sulfite + 3 NADPH + 4 H(+). The protein operates within sulfur metabolism; hydrogen sulfide biosynthesis; hydrogen sulfide from sulfite (NADPH route): step 1/1. Its function is as follows. Component of the sulfite reductase complex that catalyzes the 6-electron reduction of sulfite to sulfide. This is one of several activities required for the biosynthesis of L-cysteine from sulfate. The flavoprotein component catalyzes the electron flow from NADPH -&gt; FAD -&gt; FMN to the hemoprotein component. The chain is Sulfite reductase [NADPH] flavoprotein alpha-component from Salmonella arizonae (strain ATCC BAA-731 / CDC346-86 / RSK2980).